The sequence spans 333 residues: UDP-3-O-acylglucosamine N-acyltransferase (333 aa).

The Proton acceptor role is filled by H225.

It belongs to the transferase hexapeptide repeat family. LpxD subfamily. Homotrimer.

It catalyses the reaction a UDP-3-O-[(3R)-3-hydroxyacyl]-alpha-D-glucosamine + a (3R)-hydroxyacyl-[ACP] = a UDP-2-N,3-O-bis[(3R)-3-hydroxyacyl]-alpha-D-glucosamine + holo-[ACP] + H(+). The protein operates within bacterial outer membrane biogenesis; LPS lipid A biosynthesis. In terms of biological role, catalyzes the N-acylation of UDP-3-O-acylglucosamine using 3-hydroxyacyl-ACP as the acyl donor. Is involved in the biosynthesis of lipid A, a phosphorylated glycolipid that anchors the lipopolysaccharide to the outer membrane of the cell. This chain is UDP-3-O-acylglucosamine N-acyltransferase, found in Paracidovorax citrulli (strain AAC00-1) (Acidovorax citrulli).